We begin with the raw amino-acid sequence, 133 residues long: ATP synthase epsilon chain, chloroplastic (133 aa).

Belongs to the ATPase epsilon chain family. F-type ATPases have 2 components, CF(1) - the catalytic core - and CF(0) - the membrane proton channel. CF(1) has five subunits: alpha(3), beta(3), gamma(1), delta(1), epsilon(1). CF(0) has three main subunits: a, b and c.

It is found in the plastid. The protein resides in the chloroplast thylakoid membrane. Produces ATP from ADP in the presence of a proton gradient across the membrane. This Daucus carota (Wild carrot) protein is ATP synthase epsilon chain, chloroplastic.